A 342-amino-acid polypeptide reads, in one-letter code: S-adenosylmethionine:tRNA ribosyltransferase-isomerase (342 aa).

This sequence belongs to the QueA family. Monomer.

The protein resides in the cytoplasm. It carries out the reaction 7-aminomethyl-7-carbaguanosine(34) in tRNA + S-adenosyl-L-methionine = epoxyqueuosine(34) in tRNA + adenine + L-methionine + 2 H(+). The protein operates within tRNA modification; tRNA-queuosine biosynthesis. In terms of biological role, transfers and isomerizes the ribose moiety from AdoMet to the 7-aminomethyl group of 7-deazaguanine (preQ1-tRNA) to give epoxyqueuosine (oQ-tRNA). The chain is S-adenosylmethionine:tRNA ribosyltransferase-isomerase from Brevibacillus brevis (strain 47 / JCM 6285 / NBRC 100599).